Reading from the N-terminus, the 161-residue chain is Cytochrome c-type biogenesis protein CcmE (161 aa).

At 1–8 (MNPRRKKR) the chain is on the cytoplasmic side. A helical; Signal-anchor for type II membrane protein transmembrane segment spans residues 9-29 (LTLAIALIGGVAAIASLLLYA). Topologically, residues 30–161 (LNSNLNLFYT…DYSQQKSAAQ (132 aa)) are periplasmic. The heme site is built by H131 and Y135. Residues 138 to 161 (PEVAEAMGQKHEKLDYSQQKSAAQ) form a disordered region.

This sequence belongs to the CcmE/CycJ family.

It localises to the cell inner membrane. Heme chaperone required for the biogenesis of c-type cytochromes. Transiently binds heme delivered by CcmC and transfers the heme to apo-cytochromes in a process facilitated by CcmF and CcmH. The chain is Cytochrome c-type biogenesis protein CcmE from Shewanella sp. (strain MR-4).